The following is a 130-amino-acid chain: Blasticidin-S deaminase (130 aa).

Residues 1-129 (MPLSQEESTL…ELLPSGYVWE (129 aa)) enclose the CMP/dCMP-type deaminase domain. Serine 28 contributes to the substrate binding site. Cysteine 54 is a Zn(2+) binding site. Glutamate 56 serves as the catalytic Proton donor. Residue arginine 82 coordinates substrate. Zn(2+)-binding residues include cysteine 88 and cysteine 91. Substrate is bound by residues tyrosine 126 and tryptophan 128.

It belongs to the cytidine and deoxycytidylate deaminase family. As to quaternary structure, homotetramer. Requires Zn(2+) as cofactor.

The enzyme catalyses blasticidin S + H2O + H(+) = deaminohydroxyblasticidin S + NH4(+). Its function is as follows. Catalyzes the deamination of the cytosine moiety of the antibiotics blasticidin S, cytomycin and acetylblasticidin S. This Aspergillus terreus protein is Blasticidin-S deaminase (bsd).